The chain runs to 307 residues: Membrane protein insertase YidC 2 (307 aa).

The signal sequence occupies residues 1-23 (MKLTLNRILFSGLALSILFTLTG). Residue Cys24 is the site of N-palmitoyl cysteine attachment. Cys24 carries S-diacylglycerol cysteine lipidation. Helical transmembrane passes span 58 to 78 (LGYG…ILPL), 135 to 155 (LGGI…AMYF), 179 to 199 (VLTA…MMAV), 209 to 225 (TMMY…SFSL), and 231 to 251 (LYWL…TYLL). Residues 263–307 (YAKTPPKAYQSTSSRKDVTPSQNMEQANLPKKIKSNRNAGKQRKR) form a disordered region. A compositionally biased stretch (polar residues) spans 271 to 288 (YQSTSSRKDVTPSQNMEQ). Over residues 293–307 (KKIKSNRNAGKQRKR) the composition is skewed to basic residues.

The protein belongs to the OXA1/ALB3/YidC family. Type 2 subfamily.

Its subcellular location is the cell membrane. In terms of biological role, required for the insertion and/or proper folding and/or complex formation of integral membrane proteins into the membrane. Involved in integration of membrane proteins that insert both dependently and independently of the Sec translocase complex, as well as at least some lipoproteins. The chain is Membrane protein insertase YidC 2 from Streptococcus pyogenes serotype M18 (strain MGAS8232).